The chain runs to 90 residues: Large ribosomal subunit protein bL27 (90 aa).

Positions 1-20 (MAHKKAGGSSRNGRDSAGKR) are disordered.

Belongs to the bacterial ribosomal protein bL27 family.

In Rhodopseudomonas palustris (strain BisB18), this protein is Large ribosomal subunit protein bL27.